Consider the following 379-residue polypeptide: Cobalt-precorrin-5B C(1)-methyltransferase (379 aa).

This sequence belongs to the CbiD family.

The catalysed reaction is Co-precorrin-5B + S-adenosyl-L-methionine = Co-precorrin-6A + S-adenosyl-L-homocysteine. The protein operates within cofactor biosynthesis; adenosylcobalamin biosynthesis; cob(II)yrinate a,c-diamide from sirohydrochlorin (anaerobic route): step 6/10. Its function is as follows. Catalyzes the methylation of C-1 in cobalt-precorrin-5B to form cobalt-precorrin-6A. The sequence is that of Cobalt-precorrin-5B C(1)-methyltransferase from Edwardsiella ictaluri (strain 93-146).